The following is a 98-amino-acid chain: Large ribosomal subunit protein uL23 (98 aa).

Belongs to the universal ribosomal protein uL23 family. As to quaternary structure, part of the 50S ribosomal subunit. Contacts protein L29, and trigger factor when it is bound to the ribosome.

One of the early assembly proteins it binds 23S rRNA. One of the proteins that surrounds the polypeptide exit tunnel on the outside of the ribosome. Forms the main docking site for trigger factor binding to the ribosome. The sequence is that of Large ribosomal subunit protein uL23 from Clostridium acetobutylicum (strain ATCC 824 / DSM 792 / JCM 1419 / IAM 19013 / LMG 5710 / NBRC 13948 / NRRL B-527 / VKM B-1787 / 2291 / W).